The following is a 229-amino-acid chain: Translin (229 aa).

Residues 86-90 (RFHEH) are DNA/RNA binding. The interval 177–198 (LDSGFRLLNLKNDSLRKRYDGL) is leucine-zipper.

The protein belongs to the translin family. In terms of assembly, ring-shaped heterooctamer of six TSN and two TSNAX subunits, DNA/RNA binding occurs inside the ring.

The protein resides in the cytoplasm. It localises to the nucleus. Its function is as follows. Exhibits both single-stranded and double-stranded endoribonuclease activity. May act as an activator of RNA-induced silencing complex (RISC) by facilitating endonucleolytic cleavage of the siRNA passenger strand. DNA-binding protein that specifically recognizes consensus sequences at the breakpoint junctions in chromosomal translocations, mostly involving immunoglobulin (Ig)/T-cell receptor gene segments. Seems to recognize single-stranded DNA ends generated by staggered breaks occurring at recombination hot spots. This Gallus gallus (Chicken) protein is Translin (TSN).